Consider the following 171-residue polypeptide: NADH-quinone oxidoreductase subunit I (171 aa).

2 consecutive 4Fe-4S ferredoxin-type domains span residues 63–92 and 102–131; these read RRYE…IESD and TRYD…ETQI. Cys72, Cys75, Cys78, Cys82, Cys111, Cys114, Cys117, and Cys121 together coordinate [4Fe-4S] cluster.

It belongs to the complex I 23 kDa subunit family. As to quaternary structure, NDH-1 is composed of 14 different subunits. Subunits NuoA, H, J, K, L, M, N constitute the membrane sector of the complex. [4Fe-4S] cluster serves as cofactor.

The protein resides in the cell inner membrane. It carries out the reaction a quinone + NADH + 5 H(+)(in) = a quinol + NAD(+) + 4 H(+)(out). Functionally, NDH-1 shuttles electrons from NADH, via FMN and iron-sulfur (Fe-S) centers, to quinones in the respiratory chain. The immediate electron acceptor for the enzyme in this species is believed to be ubiquinone. Couples the redox reaction to proton translocation (for every two electrons transferred, four hydrogen ions are translocated across the cytoplasmic membrane), and thus conserves the redox energy in a proton gradient. This is NADH-quinone oxidoreductase subunit I from Paracidovorax citrulli (strain AAC00-1) (Acidovorax citrulli).